A 2395-amino-acid chain; its full sequence is Helicase ssl-1 (2395 aa).

Positions 1–12 are enriched in low complexity; the sequence is MPATPVRASSTR. Residues 1 to 62 are disordered; that stretch reads MPATPVRASS…EKKKKKTSDD (62 aa). An HSA domain is found at 227–300; sequence LPKCVEPERN…IKEKRKMCAG (74 aa). Polar residues predominate over residues 354–363; sequence LVSSSKSPSI. Disordered regions lie at residues 354-404 and 444-504; these read LVSS…VRQE and EKLE…HGVL. Basic and acidic residues-rich tracts occupy residues 365–375, 394–404, and 444–462; these read SDRDDKDEEFK, KSQKKEDVRQE, and EKLE…NEEK. The stretch at 388 to 464 forms a coiled coil; sequence TIANAEKSQK…ACGDNEEKME (77 aa). Positions 470–490 are enriched in polar residues; sequence SSDAQKPSTSSSDLTAEQLQD. Positions 570-735 constitute a Helicase ATP-binding domain; sequence VTLYEKNLNG…WSLMHFLMPT (166 aa). An ATP-binding site is contributed by 583 to 590; that stretch reads DEMGLGKT. The tract at residues 963-982 is disordered; the sequence is AQPLQNGNSIPQNAPNRPQT. A Helicase C-terminal domain is found at 1196–1342; sequence LLRQLYLYKH…ELAIDEAGFT (147 aa). A coiled-coil region spans residues 1452–1476; the sequence is KPEFEEECKEAEALIDQKREEWDKN. Disordered stretches follow at residues 1615–1706, 1977–2073, 2092–2143, 2276–2306, and 2350–2395; these read ESAA…EEPD, SIQH…RRNA, QSGK…PQQR, QMRS…RPLV, and MQMP…PPQN. Low complexity-rich tracts occupy residues 1647–1669 and 1981–1995; these read QQPT…QQQQ and LQSS…QNLQ. Positions 1996 to 2019 are enriched in polar residues; that stretch reads NSHNSEQRNNVQNMHQNQYNSSQN. Low complexity-rich tracts occupy residues 2051 to 2073 and 2092 to 2114; these read LVQQ…RRNA and QSGK…SSND. The segment covering 2115–2129 has biased composition (gly residues); sequence GQGGASTVGGGGGGS. The span at 2130–2142 shows a compositional bias: low complexity; sequence QQPHQQQQQQPQQ. Positions 2281 to 2299 are enriched in gly residues; that stretch reads NGGGVGGQGGLQGGPGGPQ. Positions 2361 to 2377 are enriched in low complexity; it reads QQQAPPQSSQQASQQAP.

Belongs to the SNF2/RAD54 helicase family. SWR1 subfamily.

The protein localises to the nucleus. Functionally, probable catalytic component of a chromatin-remodeling complex which mediates the ATP-dependent exchange of histone H2A variant H2AV/htz-1 for H2A, leading to transcriptional regulation of selected genes by chromatin remodeling. Involved in foregut development, and may be involved in vulval development. The protein is Helicase ssl-1 (ssl-1) of Caenorhabditis elegans.